The sequence spans 443 residues: F-box only protein 39 (443 aa).

In terms of domain architecture, F-box spans 16 to 61; that stretch reads WATLPDVCLRRVFWWLGDRDRSRAALVCRKWNQMMYSADLWRYRTI.

In terms of assembly, directly interacts with SKP1 and CUL1.

In terms of biological role, substrate-recognition component of the SCF (SKP1-CUL1-F-box protein)-type E3 ubiquitin ligase complex. In Bos taurus (Bovine), this protein is F-box only protein 39 (FBXO39).